The chain runs to 228 residues: Sec-independent protein translocase protein TatB (228 aa).

Residues 1 to 21 (MFDFGLGELVFVGIIALIVLG) traverse the membrane as a helical segment. Disordered regions lie at residues 138–162 (RSYASAETLGDSGQTGSTAEPAETD) and 195–228 (PVPHTTSLRKQAISRKRDLRPKSRAKPKLRVRKS). Positions 206-228 (AISRKRDLRPKSRAKPKLRVRKS) are enriched in basic residues.

The protein belongs to the TatB family. As to quaternary structure, the Tat system comprises two distinct complexes: a TatABC complex, containing multiple copies of TatA, TatB and TatC subunits, and a separate TatA complex, containing only TatA subunits. Substrates initially bind to the TatABC complex, which probably triggers association of the separate TatA complex to form the active translocon.

The protein localises to the cell inner membrane. Functionally, part of the twin-arginine translocation (Tat) system that transports large folded proteins containing a characteristic twin-arginine motif in their signal peptide across membranes. Together with TatC, TatB is part of a receptor directly interacting with Tat signal peptides. TatB may form an oligomeric binding site that transiently accommodates folded Tat precursor proteins before their translocation. This chain is Sec-independent protein translocase protein TatB, found in Neisseria meningitidis serogroup A / serotype 4A (strain DSM 15465 / Z2491).